A 248-amino-acid polypeptide reads, in one-letter code: tRNA (guanine-N(1)-)-methyltransferase (248 aa).

S-adenosyl-L-methionine is bound by residues Gly113 and 133–138; that span reads IGDFVL.

Belongs to the RNA methyltransferase TrmD family. As to quaternary structure, homodimer.

It localises to the cytoplasm. The catalysed reaction is guanosine(37) in tRNA + S-adenosyl-L-methionine = N(1)-methylguanosine(37) in tRNA + S-adenosyl-L-homocysteine + H(+). In terms of biological role, specifically methylates guanosine-37 in various tRNAs. The sequence is that of tRNA (guanine-N(1)-)-methyltransferase from Dehalococcoides mccartyi (strain ATCC BAA-2100 / JCM 16839 / KCTC 5957 / BAV1).